A 67-amino-acid chain; its full sequence is Small integral membrane protein 20 (67 aa).

The Mitochondrial matrix portion of the chain corresponds to 1 to 6; that stretch reads MSRNLR. The helical transmembrane segment at 7–27 threads the bilayer; that stretch reads TALIFGGFISLIGAAFYPIYF. Residues 28–67 lie on the Mitochondrial intermembrane side of the membrane; it reads RPLMRLEEYKKEQAINRAGIVQEDVQPPGLKVWSDPFGRK. Phenylalanine amide is present on phenylalanine 64.

In terms of assembly, component of the MITRAC (mitochondrial translation regulation assembly intermediate of cytochrome c oxidase complex) complex, the core components of this complex being COA3/MITRAC12 and COX14. Interacts with COA3/MITRAC12 and COX4I1. Directly interacts with newly synthesized MT-CO1/COX1. Expressed in the ovary, specifically in granulosa cells of follicles that have passed the primary stage and in oocytes (at protein level).

Its subcellular location is the mitochondrion inner membrane. It is found in the secreted. Its function is as follows. Component of the MITRAC (mitochondrial translation regulation assembly intermediate of cytochrome c oxidase complex) complex, that regulates cytochrome c oxidase assembly. Promotes the progression of complex assembly after the association of MT-CO1/COX1 with COX4I1 and COX6C. Chaperone-like assembly factor required to stabilize newly synthesized MT-CO1/COX1 and to prevent its premature turnover. In terms of biological role, peptide involved in a broad spectrum of regulatory functions. Is a ligand for GPR173. As part of the reproductive cycle, it regulates gonadotropin-releasing hormone (GnRH) signaling in the hypothalamus and pituitary gland which augments the release of luteinizing hormone. Plays a protective role in memory retention through activation of GNRHR. Regulates the secretion of AVP by hypothalamic neurons. Plays a role in the transduction of the itch sensation. Induces anxiolytic effects, reducing behavior associated with anxiety. Regulates food intake as well as satiation and satiety. In the ovary, it regulates follicular growth by stimulating granulosa cell proliferation by increasing the expression of GPR173, CREB1, CYP19A1, KITLG, FSHR, and LHCGR. It also increases the production of estradiol (E2). In the heart, it regulates contractility and relaxation. It also plays a cardioprotective role during ischemia, where it activates the SAFE and RISK pathways. Stimulates the proliferation and differentiation of preadipocytes. In pancreatic islet cells, it induces proliferation of islet cells as well as the production of INS. The polypeptide is Small integral membrane protein 20 (SMIM20) (Homo sapiens (Human)).